Reading from the N-terminus, the 403-residue chain is tRNA methyltransferase 10 homolog C (403 aa).

The N-terminal 39 residues, 1-39 (MAAFLKMSVSVNFFRPFTRFLVPFTLHRKRNNLTILQRY), are a transit peptide targeting the mitochondrion. Serine 84 carries the phosphoserine modification. A coiled-coil region spans residues 138 to 169 (TKEKVKKARQIKKEMKAAAREEAKNIKLLETT). Positions 191 to 383 (MGWKGAQAMQ…QFVPKRKHTG (193 aa)) constitute an SAM-dependent MTase TRM10-type domain.

This sequence belongs to the class IV-like SAM-binding methyltransferase superfamily. TRM10 family. In terms of assembly, component of mitochondrial ribonuclease P, a complex composed of TRMT10C/MRPP1, HSD17B10/MRPP2 and PRORP/MRPP3. Interacts with HSD17B10/MRPP2; forming the MRPP1-MRPP2 subcomplex of the mitochondrial ribonuclease P complex. Interacts with GRSF1.

The protein localises to the mitochondrion matrix. It localises to the mitochondrion nucleoid. It carries out the reaction adenosine(9) in tRNA + S-adenosyl-L-methionine = N(1)-methyladenosine(9) in tRNA + S-adenosyl-L-homocysteine + H(+). The catalysed reaction is guanosine(9) in tRNA + S-adenosyl-L-methionine = N(1)-methylguanosine(9) in tRNA + S-adenosyl-L-homocysteine + H(+). It catalyses the reaction an adenosine in mRNA + S-adenosyl-L-methionine = an N(1)-methyladenosine in mRNA + S-adenosyl-L-homocysteine + H(+). In terms of biological role, mitochondrial tRNA N(1)-methyltransferase involved in mitochondrial tRNA maturation. Component of mitochondrial ribonuclease P, a complex composed of TRMT10C/MRPP1, HSD17B10/MRPP2 and PRORP/MRPP3, which cleaves tRNA molecules in their 5'-ends. Together with HSD17B10/MRPP2, forms a subcomplex of the mitochondrial ribonuclease P, named MRPP1-MRPP2 subcomplex, which displays functions that are independent of the ribonuclease P activity. The MRPP1-MRPP2 subcomplex catalyzes the formation of N(1)-methylguanine and N(1)-methyladenine at position 9 (m1G9 and m1A9, respectively) in tRNAs; TRMT10C/MRPP1 acting as the catalytic N(1)-methyltransferase subunit. The MRPP1-MRPP2 subcomplex also acts as a tRNA maturation platform: following 5'-end cleavage by the mitochondrial ribonuclease P complex, the MRPP1-MRPP2 subcomplex enhances the efficiency of 3'-processing catalyzed by ELAC2, retains the tRNA product after ELAC2 processing and presents the nascent tRNA to the mitochondrial CCA tRNA nucleotidyltransferase TRNT1 enzyme. In addition to tRNA N(1)-methyltransferase activity, TRMT10C/MRPP1 also acts as a mRNA N(1)-methyltransferase by mediating methylation of adenosine residues at the N(1) position of MT-ND5 mRNA. Associates with mitochondrial DNA complexes at the nucleoids to initiate RNA processing and ribosome assembly. This Homo sapiens (Human) protein is tRNA methyltransferase 10 homolog C.